The chain runs to 393 residues: Phospholipase A1-II 1 (393 aa).

Residues 200–220 (QVLNEIKRLQDMYEHEETSIT) are a coiled coil. The active-site Acyl-ester intermediate is S225. Residues S225, D284, and H321 each act as charge relay system in the active site.

This sequence belongs to the AB hydrolase superfamily. Lipase family.

Its subcellular location is the cytoplasm. Its function is as follows. Acylhydrolase that catalyzes the hydrolysis of phospholipids at the sn-1 position. The polypeptide is Phospholipase A1-II 1 (Oryza sativa subsp. indica (Rice)).